The primary structure comprises 150 residues: Ribonuclease HI (150 aa).

The RNase H type-1 domain occupies 1–141 (MKSINAYTDG…VDVLARGQAM (141 aa)). Positions 9, 47, 69, and 133 each coordinate Mg(2+).

Belongs to the RNase H family. Monomer. It depends on Mg(2+) as a cofactor.

The protein resides in the cytoplasm. It carries out the reaction Endonucleolytic cleavage to 5'-phosphomonoester.. Functionally, endonuclease that specifically degrades the RNA of RNA-DNA hybrids. This Xylella fastidiosa (strain 9a5c) protein is Ribonuclease HI.